A 317-amino-acid chain; its full sequence is tRNA dimethylallyltransferase (317 aa).

ATP is bound at residue 19–26 (GPTASGKS). A substrate-binding site is contributed by 21-26 (TASGKS). Residues 44-47 (DSMQ) are interaction with substrate tRNA.

It belongs to the IPP transferase family. As to quaternary structure, monomer. Mg(2+) is required as a cofactor.

It catalyses the reaction adenosine(37) in tRNA + dimethylallyl diphosphate = N(6)-dimethylallyladenosine(37) in tRNA + diphosphate. In terms of biological role, catalyzes the transfer of a dimethylallyl group onto the adenine at position 37 in tRNAs that read codons beginning with uridine, leading to the formation of N6-(dimethylallyl)adenosine (i(6)A). This Methylorubrum extorquens (strain PA1) (Methylobacterium extorquens) protein is tRNA dimethylallyltransferase.